A 312-amino-acid polypeptide reads, in one-letter code: MTKSVTVKDLKERLNLELICSETGLERPILTSDLSRPGLELTGFFSYYPEDRVQLFGMTEISFSEGMEPEERLKRYKQMCTKRTPAFVISRNLEVPKELVAAAKEADIPVLRSRLKTTRLSVYITNYLESRLAPVISMHGVLVDIYGLGVLITGSSGVGKSETALELVKRGHRLVADDNVEIRQEDELTLIGSSPAIIEHLLEIRGLGIINVMTLFGAGAVRSSKKITIVVHLENWDPDKHYDRVGLDQEKTKIFDMDIPKITVPVRPGRNLSVIIEVAAMNFRLKNMGYNAAEQFTQDLNNLIGHNSSMND.

Catalysis depends on residues H139 and K160. 154–161 (GSSGVGKS) serves as a coordination point for ATP. S161 contacts Mg(2+). The active-site Proton acceptor; for phosphorylation activity. Proton donor; for dephosphorylation activity is D178. The tract at residues 202-211 (LEIRGLGIIN) is important for the catalytic mechanism of both phosphorylation and dephosphorylation. E203 lines the Mg(2+) pocket. R244 is a catalytic residue. The interval 265-270 (PVRPGR) is important for the catalytic mechanism of dephosphorylation.

This sequence belongs to the HPrK/P family. Homohexamer. It depends on Mg(2+) as a cofactor.

The catalysed reaction is [HPr protein]-L-serine + ATP = [HPr protein]-O-phospho-L-serine + ADP + H(+). It catalyses the reaction [HPr protein]-O-phospho-L-serine + phosphate + H(+) = [HPr protein]-L-serine + diphosphate. Catalyzes the ATP- as well as the pyrophosphate-dependent phosphorylation of a specific serine residue in HPr, a phosphocarrier protein of the phosphoenolpyruvate-dependent sugar phosphotransferase system (PTS). HprK/P also catalyzes the pyrophosphate-producing, inorganic phosphate-dependent dephosphorylation (phosphorolysis) of seryl-phosphorylated HPr (P-Ser-HPr). The two antagonistic activities of HprK/P are regulated by several intracellular metabolites, which change their concentration in response to the absence or presence of rapidly metabolisable carbon sources (glucose, fructose, etc.) in the growth medium. Therefore, by controlling the phosphorylation state of HPr, HPrK/P is a sensor enzyme that plays a major role in the regulation of carbon metabolism and sugar transport: it mediates carbon catabolite repression (CCR), and regulates PTS-catalyzed carbohydrate uptake and inducer exclusion. The sequence is that of HPr kinase/phosphorylase from Listeria welshimeri serovar 6b (strain ATCC 35897 / DSM 20650 / CCUG 15529 / CIP 8149 / NCTC 11857 / SLCC 5334 / V8).